The primary structure comprises 501 residues: Probable cytochrome P450 6t3 (501 aa).

Cys-444 is a heme binding site.

Belongs to the cytochrome P450 family. Requires heme as cofactor.

Its subcellular location is the endoplasmic reticulum membrane. The protein localises to the microsome membrane. Functionally, may be involved in the metabolism of insect hormones and in the breakdown of synthetic insecticides. The protein is Probable cytochrome P450 6t3 (Cyp6t3) of Drosophila melanogaster (Fruit fly).